A 1334-amino-acid polypeptide reads, in one-letter code: SCAR-like protein 2 (1334 aa).

The span at 197 to 207 shows a compositional bias: basic and acidic residues; it reads KTGNFQREKKS. 10 disordered regions span residues 197-281, 294-331, 481-516, 568-602, 643-668, 791-832, 931-956, 1000-1026, 1248-1268, and 1280-1304; these read KTGN…SSFS, DTKP…GTSA, PDSS…ADAP, PNQS…SSYT, DKPT…TVES, STSH…KNII, FEKK…YSEK, FQLL…GRSY, SGQQ…DTKN, and RSKT…TANS. Over residues 241-256 the composition is skewed to polar residues; it reads VQLTSRHFATPSTDGR. Residues 310 to 319 show a composition bias toward low complexity; it reads SNNNLHKLSN. Over residues 320–330 the composition is skewed to polar residues; that stretch reads TPLHTRLNGTS. The segment covering 574-595 has biased composition (basic and acidic residues); that stretch reads DSKEIPDSKAEDAPIDSPEKLE. The span at 791 to 823 shows a compositional bias: polar residues; it reads STSHSSETNQSTVRTPDTVIGQTEGSTGCSTSF. The span at 945–956 shows a compositional bias: low complexity; the sequence is SSLFSSSHYSEK. Positions 1248–1260 are enriched in basic and acidic residues; sequence SGQQKLNGHEKSK. The region spanning 1271-1289 is the WH2 domain; that stretch reads EREELLQQIRSKTFNLRRT. Low complexity predominate over residues 1289 to 1304; sequence TNASKTNTSSPTTANS.

This sequence belongs to the SCAR/WAVE family.

It is found in the cytoplasm. The protein resides in the cytoskeleton. Involved in regulation of actin and microtubule organization. Part of a WAVE complex that activates the Arp2/3 complex. This chain is SCAR-like protein 2, found in Oryza sativa subsp. japonica (Rice).